The sequence spans 417 residues: Gamma-glutamyl phosphate reductase (417 aa).

This sequence belongs to the gamma-glutamyl phosphate reductase family.

Its subcellular location is the cytoplasm. The enzyme catalyses L-glutamate 5-semialdehyde + phosphate + NADP(+) = L-glutamyl 5-phosphate + NADPH + H(+). It functions in the pathway amino-acid biosynthesis; L-proline biosynthesis; L-glutamate 5-semialdehyde from L-glutamate: step 2/2. Functionally, catalyzes the NADPH-dependent reduction of L-glutamate 5-phosphate into L-glutamate 5-semialdehyde and phosphate. The product spontaneously undergoes cyclization to form 1-pyrroline-5-carboxylate. This chain is Gamma-glutamyl phosphate reductase, found in Enterobacter sp. (strain 638).